A 386-amino-acid polypeptide reads, in one-letter code: Succinate--CoA ligase [ADP-forming] subunit beta (386 aa).

In terms of domain architecture, ATP-grasp spans 9 to 244 (KAVLRSYGVS…LDEEDSKEIE (236 aa)). ATP is bound by residues Lys46, 53 to 55 (GRG), Glu99, Cys102, and Glu107. Residues Asn199 and Asp213 each coordinate Mg(2+). Substrate contacts are provided by residues Asn264 and 321–323 (GIM).

The protein belongs to the succinate/malate CoA ligase beta subunit family. As to quaternary structure, heterotetramer of two alpha and two beta subunits. Requires Mg(2+) as cofactor.

The enzyme catalyses succinate + ATP + CoA = succinyl-CoA + ADP + phosphate. It carries out the reaction GTP + succinate + CoA = succinyl-CoA + GDP + phosphate. Its pathway is carbohydrate metabolism; tricarboxylic acid cycle; succinate from succinyl-CoA (ligase route): step 1/1. Functionally, succinyl-CoA synthetase functions in the citric acid cycle (TCA), coupling the hydrolysis of succinyl-CoA to the synthesis of either ATP or GTP and thus represents the only step of substrate-level phosphorylation in the TCA. The beta subunit provides nucleotide specificity of the enzyme and binds the substrate succinate, while the binding sites for coenzyme A and phosphate are found in the alpha subunit. In Bacillus cereus (strain ATCC 14579 / DSM 31 / CCUG 7414 / JCM 2152 / NBRC 15305 / NCIMB 9373 / NCTC 2599 / NRRL B-3711), this protein is Succinate--CoA ligase [ADP-forming] subunit beta.